The chain runs to 388 residues: PIQLNPAPDGSAVNGTSSAETNLEALQKKLEELELDEQQRKRLEAFLTQKQKVGELKDDDFEKISELGAGNGGVVFKVSHKPSGLIMARKLIHLEIKPAIRNQIIRELQVLHECNSPYIVGFYGAFYSDGEISICMEHMDGGSLDQVLKKAGRIPEQILGKVSIAVIKGLTYLREKHKIMHRDVKPSNILVNSRGEIKLCDFGVSGQLIDSMANSFVGTRSYMSPERLQGTHYSVQSDIWSMGLSLVEMAIGRYPIPPPDSKELELMFGCPVEGDSPVTETSPRQRAPGRPMSSYGSDSRPPMAIFELLDYIVNEPPPKLPNGVFGSEFQDFVNKCLIKNPAERADLKQLMIHAFIKRSEAEEVDFAGWLCSTIGLNQPSTPTHAAGV.

Positions 1–20 (PIQLNPAPDGSAVNGTSSAE) are disordered. A Protein kinase domain is found at 61–356 (FEKISELGAG…LKQLMIHAFI (296 aa)). ATP contacts are provided by residues 67–75 (LGAGNGGVV) and K90. The active-site Proton acceptor is D183. 2 positions are modified to phosphoserine; by RAF: S211 and S215. The interval 275–299 (DSPVTETSPRQRAPGRPMSSYGSDS) is disordered.

It belongs to the protein kinase superfamily. STE Ser/Thr protein kinase family. MAP kinase kinase subfamily. In terms of processing, MAPKK is itself dependent on Ser/Thr phosphorylation for activity catalyzed by MAP kinase kinase kinases (RAF or MEKK1).

The protein resides in the cytoplasm. The protein localises to the cytoskeleton. Its subcellular location is the microtubule organizing center. It is found in the centrosome. It localises to the spindle pole body. The protein resides in the nucleus. The catalysed reaction is L-seryl-[protein] + ATP = O-phospho-L-seryl-[protein] + ADP + H(+). The enzyme catalyses L-threonyl-[protein] + ATP = O-phospho-L-threonyl-[protein] + ADP + H(+). It catalyses the reaction L-tyrosyl-[protein] + ATP = O-phospho-L-tyrosyl-[protein] + ADP + H(+). Its function is as follows. Dual specificity protein kinase which acts as an essential component of the MAP kinase signal transduction pathway. Binding of extracellular ligands such as growth factors, cytokines and hormones to their cell-surface receptors activates RAS and this initiates RAF1 activation. RAF1 then further activates the dual-specificity protein kinases MAP2K1/MEK1 and MAP2K2/MEK2. Both MAP2K1/MEK1 and MAP2K2/MEK2 function specifically in the MAPK/ERK cascade, and catalyze the concomitant phosphorylation of a threonine and a tyrosine residue in a Thr-Glu-Tyr sequence located in the extracellular signal-regulated kinases MAPK3/ERK1 and MAPK1/ERK2, leading to their activation and further transduction of the signal within the MAPK/ERK cascade. Depending on the cellular context, this pathway mediates diverse biological functions such as cell growth, adhesion, survival and differentiation predominantly through the regulation of transcription, metabolism and cytoskeletal rearrangements. The sequence is that of Dual specificity mitogen-activated protein kinase kinase 1 (MAP2K1) from Serinus canaria (Island canary).